A 702-amino-acid polypeptide reads, in one-letter code: Polyribonucleotide nucleotidyltransferase (702 aa).

2 residues coordinate Mg(2+): Asp485 and Asp491. Residues 552 to 611 (PKTSTLQIDPEKIRDVIGAGGKVINKIIADTGVKIDIKEDGLVYVSSAESEGVKEAVKII) enclose the KH domain. One can recognise an S1 motif domain in the interval 621-689 (GEIYLGKVTK…SQGRINLSRK (69 aa)).

Belongs to the polyribonucleotide nucleotidyltransferase family. It depends on Mg(2+) as a cofactor.

The protein localises to the cytoplasm. The enzyme catalyses RNA(n+1) + phosphate = RNA(n) + a ribonucleoside 5'-diphosphate. Involved in mRNA degradation. Catalyzes the phosphorolysis of single-stranded polyribonucleotides processively in the 3'- to 5'-direction. The protein is Polyribonucleotide nucleotidyltransferase of Clostridium perfringens (strain SM101 / Type A).